The sequence spans 459 residues: uncharacterized protein (459 aa).

H79 is a binding site for Zn(2+). Residue E82 is the Proton acceptor of the active site. Residues H83 and E159 each contribute to the Zn(2+) site.

Belongs to the peptidase M16 family. The cofactor is Zn(2+).

This is an uncharacterized protein from Streptomyces coelicolor (strain ATCC BAA-471 / A3(2) / M145).